Here is a 299-residue protein sequence, read N- to C-terminus: Non-homologous end joining protein Ku (299 aa).

The Ku domain maps to 10–188 (ISFGLVHIPV…TEAVTDARLT (179 aa)). Disordered stretches follow at residues 227–249 (AGEG…SADV) and 261–299 (AGKS…GKAS). A compositionally biased stretch (basic and acidic residues) spans 273–283 (AAKDKVADKQS). Basic residues predominate over residues 284 to 299 (PKPKRPAVRKKTGKAS).

This sequence belongs to the prokaryotic Ku family. In terms of assembly, homodimer. Interacts with LigD.

With LigD forms a non-homologous end joining (NHEJ) DNA repair enzyme, which repairs dsDNA breaks with reduced fidelity. Binds linear dsDNA with 5'- and 3'- overhangs but not closed circular dsDNA nor ssDNA. Recruits and stimulates the ligase activity of LigD. The sequence is that of Non-homologous end joining protein Ku from Pseudomonas syringae pv. tomato (strain ATCC BAA-871 / DC3000).